A 1182-amino-acid polypeptide reads, in one-letter code: Tyrosine-protein kinase ABL2 (1182 aa).

The segment at 1 to 42 is disordered; the sequence is MGQQVGRVGEAPGLQQPQPRGIRGSSAARPSGRRRDPAGRTA. Gly2 carries N-myristoyl glycine lipidation. Residues 2–106 are CAP; that stretch reads GQQVGRVGEA…SKENLLGATE (105 aa). Over residues 20–30 the composition is skewed to low complexity; that stretch reads RGIRGSSAARP. Ser97 bears the Phosphoserine mark. In terms of domain architecture, SH3 spans 107–167; sequence SDPNLFVALY…PSNYITPVNS (61 aa). 6 positions are modified to phosphotyrosine: Tyr116, Tyr161, Tyr174, Tyr185, Tyr218, and Tyr231. An SH2 domain is found at 173-263; that stretch reads WYHGPVSRSA…GLVTTLHYPA (91 aa). Tyr261 is modified (phosphotyrosine; by ABL1 and autocatalysis). Residue Tyr272 is modified to Phosphotyrosine; by autocatalysis. Ser275 is modified (phosphoserine). The 252-residue stretch at 288–539 folds into the Protein kinase domain; the sequence is ITMKHKLGGG…PSFAETHQAF (252 aa). 294 to 302 serves as a coordination point for ATP; sequence LGGGQYGEV. Phosphotyrosine is present on residues Tyr299 and Tyr303. ATP contacts are provided by residues Lys317 and 362–368; that span reads EYMPYGN. Residue Asp409 is the Proton acceptor of the active site. A Kinase activation loop motif is present at residues 427-451; that stretch reads DFGLSRLMTGDTYTAHAGAKFPIKW. Tyr439 bears the Phosphotyrosine; by autocatalysis and SRC-type Tyr-kinases mark. Tyr459 carries the phosphotyrosine modification. Tyr568 bears the Phosphotyrosine; by autocatalysis mark. Residues Ser606, Ser621, Ser632, Ser634, and Ser656 each carry the phosphoserine modification. Disordered regions lie at residues 612-642 and 655-674; these read IRSTQASSGSPALPRKQRDKSPSSLLEDAKE and SSFMKKRNAPTPPKRSSSFR. The Nuclear localization signal motif lies at 659–661; it reads KKR. Phosphoserine is present on residues Ser670, Ser671, and Ser672. Tyr684 is subject to Phosphotyrosine; by autocatalysis. An F-actin-binding region spans residues 695 to 930; sequence SLQNADGFSV…AVLPTTHNHK (236 aa). A Phosphotyrosine modification is found at Tyr719. Residues 765–796 are disordered; sequence LRAGKPTASDDTSKPFPRSNSTSSMSSGLPEQ. Lys778 carries the N6-acetyllysine modification. Polar residues predominate over residues 782-793; the sequence is RSNSTSSMSSGL. A Phosphoserine modification is found at Ser785. A Phosphothreonine modification is found at Thr802. Residues 809–825 show a composition bias toward polar residues; sequence RSKLQLERTVSTSSQPE. A disordered region spans residues 809 to 858; the sequence is RSKLQLERTVSTSSQPEENVDRANDMLPKKSEEGAAPARERPKAKLLPRG. A phosphoserine mark is found at Ser819 and Ser822. Residues 827–851 are compositionally biased toward basic and acidic residues; it reads NVDRANDMLPKKSEEGAAPARERPK. Phosphoserine occurs at positions 915 and 936. Positions 964–1059 are disordered; that stretch reads HQVTSSGDKD…TSSISPAKMA (96 aa). Positions 1020-1182 are F-actin-binding; it reads EGGKKAAPGP…VQEISDVVQR (163 aa).

Belongs to the protein kinase superfamily. Tyr protein kinase family. ABL subfamily. As to quaternary structure, interacts with PSMA7. Interacts with CTTN. Found in a complex with ABL1, ABL2, CRK and UNC119; leading to the inhibition of CRK phosphorylation by ABL kinases. Mg(2+) serves as cofactor. Requires Mn(2+) as cofactor. Phosphorylated at Tyr-261 by ABL1 in response to oxidative stress. Phosphorylated by PDGFRB. In terms of processing, polyubiquitinated. Polyubiquitination of ABL2 leads to degradation. In terms of tissue distribution, most abundant in adult mouse brain, especially in synapse-rich regions.

It localises to the cytoplasm. Its subcellular location is the cytoskeleton. It carries out the reaction L-tyrosyl-[protein] + ATP = O-phospho-L-tyrosyl-[protein] + ADP + H(+). Its activity is regulated as follows. Stabilized in the inactive form by an association between the SH3 domain and the SH2-TK linker region, interactions of the N-terminal cap, and contributions from an N-terminal myristoyl group and phospholipids. Activated by autophosphorylation as well as by SRC-family kinase-mediated phosphorylation. Activated by RIN1 binding to the SH2 and SH3 domains. Inhibited by imatinib mesylate (Gleevec). Phosphatidylinositol 4,5-bisphosphate (PIP2), a highly abundant phosphoinositide known to regulate cytoskeletal and membrane proteins, inhibits the tyrosine kinase activity. Its function is as follows. Non-receptor tyrosine-protein kinase that plays an ABL1-overlapping role in key processes linked to cell growth and survival such as cytoskeleton remodeling in response to extracellular stimuli, cell motility and adhesion, receptor endocytosis, autophagy, DNA damage response and apoptosis. Coordinates actin remodeling through tyrosine phosphorylation of proteins controlling cytoskeleton dynamics like MYH10 (involved in movement); CTTN (involved in signaling); or TUBA1 and TUBB (microtubule subunits). Binds directly F-actin and regulates actin cytoskeletal structure through its F-actin-bundling activity. Involved in the regulation of cell adhesion and motility through phosphorylation of key regulators of these processes such as CRK, CRKL or DOK1. Required for adhesion-dependent phosphorylation of ARHGAP35 which promotes its association with RASA1, resulting in recruitment of ARHGAP35 to the cell periphery where it inhibits RHO. Phosphorylates multiple receptor tyrosine kinases like PDGFRB and other substrates which are involved in endocytosis regulation such as RIN1. In brain, may regulate neurotransmission by phosphorylating proteins at the synapse. Finally, functions as its own regulator through autocatalytic activity as well as through phosphorylation of its inhibitor, ABI1. Positively regulates chemokine-mediated T-cell migration, polarization, and homing to lymph nodes and immune-challenged tissues, potentially via activation of NEDD9/HEF1 and RAP1. This Mus musculus (Mouse) protein is Tyrosine-protein kinase ABL2.